The primary structure comprises 377 residues: Signal peptide peptidase (377 aa).

Residues Met-1–Ser-27 are disordered. Residues Met-1–Gly-31 are Lumenal-facing. N-linked (GlcNAc...) asparagine glycosylation is found at Asn-10 and Asn-20. Residues Ile-32–Leu-52 traverse the membrane as a helical segment. Residues Arg-53 to Arg-77 lie on the Cytoplasmic side of the membrane. A helical transmembrane segment spans residues Phe-78 to Gln-98. Over Glu-99–Tyr-100 the chain is Lumenal. The helical transmembrane segment at Ile-101–Ile-121 threads the bilayer. The Cytoplasmic portion of the chain corresponds to Ser-122–Glu-157. A helical membrane pass occupies residues Phe-158 to Leu-178. Residues Arg-179–His-181 lie on the Lumenal side of the membrane. Residues Trp-182–Leu-202 form a helical membrane-spanning segment. At Asn-203 to Cys-209 the chain is on the cytoplasmic side. The helical transmembrane segment at Ile-210–Val-230 threads the bilayer. Asp-219 is a catalytic residue. At Thr-231–Asn-256 the chain is on the lumenal side. Residues Asn-257–Leu-277 form a helical membrane-spanning segment. Asp-265 is a catalytic residue. Residues Arg-278–Tyr-290 are Cytoplasmic-facing. A helical membrane pass occupies residues Phe-291–Ile-311. Residues Phe-312 to His-314 are Lumenal-facing. Residues Ala-315–Leu-335 traverse the membrane as a helical segment. The PAL signature appears at Pro-317–Leu-319. Residues Ala-336 to Lys-377 lie on the Cytoplasmic side of the membrane. A disordered region spans residues Ser-345 to Lys-377. Ser-367 is subject to Phosphoserine.

The protein belongs to the peptidase A22B family. In terms of assembly, monomer. Homodimer. Interacts with RNF139. Interacts with DERL1 and XBP1 isoform 1. N-glycosylated. As to expression, widely expressed with highest levels in kidney, liver, placenta, lung, leukocytes and small intestine and reduced expression in heart and skeletal muscle. Expressed abundantly in the CNS with highest levels in thalamus and medulla.

It is found in the endoplasmic reticulum membrane. The protein resides in the membrane. Its subcellular location is the cell membrane. Functionally, catalyzes intramembrane proteolysis of signal peptides that have been removed from precursors of secretory and membrane proteins, resulting in the release of the fragment from the ER membrane into the cytoplasm. Required to generate lymphocyte cell surface (HLA-E) epitopes derived from MHC class I signal peptides. May be necessary for the removal of the signal peptide that remains attached to the hepatitis C virus core protein after the initial proteolytic processing of the polyprotein. Involved in the intramembrane cleavage of the integral membrane protein PSEN1. Cleaves the integral membrane protein XBP1 isoform 1 in a DERL1/RNF139-dependent manner. May play a role in graft rejection. This chain is Signal peptide peptidase, found in Homo sapiens (Human).